The primary structure comprises 394 residues: Gastricsin (394 aa).

The signal sequence occupies residues M1–A16. A propeptide spans T17–F65 (activation peptide). Residues Y79–A391 form the Peptidase A1 domain. The active site involves D97. Intrachain disulfides connect C110–C115 and C273–C277. The active site involves T283. C316 and C349 are disulfide-bonded.

The protein belongs to the peptidase A1 family.

Its subcellular location is the secreted. It carries out the reaction More restricted specificity than pepsin A, but shows preferential cleavage at Tyr-|-Xaa bonds. High activity on hemoglobin.. Hydrolyzes a variety of proteins. The protein is Gastricsin (PGC) of Cavia porcellus (Guinea pig).